The sequence spans 215 residues: Cytochrome b6 (215 aa).

Residues 32 to 52 traverse the membrane as a helical segment; the sequence is IFYCLGGITLTCFLVQVATGF. Residue C35 coordinates heme c. Positions 86 and 100 each coordinate heme b. 3 helical membrane passes run 90–110, 116–136, and 186–206; these read ASMM…TGGF, LTWV…VTGY, and LHTF…FPMI. Residues H187 and H202 each coordinate heme b.

Belongs to the cytochrome b family. PetB subfamily. The 4 large subunits of the cytochrome b6-f complex are cytochrome b6, subunit IV (17 kDa polypeptide, PetD), cytochrome f and the Rieske protein, while the 4 small subunits are PetG, PetL, PetM and PetN. The complex functions as a dimer. Heme b is required as a cofactor. It depends on heme c as a cofactor.

It localises to the plastid. Its subcellular location is the chloroplast thylakoid membrane. Component of the cytochrome b6-f complex, which mediates electron transfer between photosystem II (PSII) and photosystem I (PSI), cyclic electron flow around PSI, and state transitions. The chain is Cytochrome b6 from Lactuca sativa (Garden lettuce).